Consider the following 468-residue polypeptide: MKSAVETLNPTRVRLTVEVPFEELKDSLDAAYKKINQQVTVKGFRKGKIPARVIDQRFGRGAVLEEAVNDALPKFYTDAVNEAELNPLGQPEVDITELKDGETLNFTAEVDIRPSIEIPDYSGIEVEVDAVEVTDEDVEKSVEQLRERFASTSPVERAAADGDVLTLDLQAKVDGEILEDGVADGVSYTIGSGELLDGIDEAVKGLEAGGEATFTSELKGGSAAGKEAEVTVKVSQVAARELPELDDDFAQLASEFDTLEELQADSRKRLANMKQYDQATQAQERVLDKLLELVEVPVPEKLLEDEINTRKHNLEHHQLGQMGLDLEKYLELQGKTAEEFETETREAAVKGIKTQFVLDELVKQEKLNVSQEELTEHLMRRAASSGMSPDQFAQAVVEQGQVPLLVGEVARGKALAAVVEKATVKDTNGEIVDLDDEEDEETEAAEADATEAADAEKADDKAEEKTEG.

Residues 162–243 (GDVLTLDLQA…VSQVAARELP (82 aa)) enclose the PPIase FKBP-type domain. The tract at residues 428–468 (NGEIVDLDDEEDEETEAAEADATEAADAEKADDKAEEKTEG) is disordered. The segment covering 432–453 (VDLDDEEDEETEAAEADATEAA) has biased composition (acidic residues). The segment covering 454–468 (DAEKADDKAEEKTEG) has biased composition (basic and acidic residues).

Belongs to the FKBP-type PPIase family. Tig subfamily.

It localises to the cytoplasm. The enzyme catalyses [protein]-peptidylproline (omega=180) = [protein]-peptidylproline (omega=0). Its function is as follows. Involved in protein export. Acts as a chaperone by maintaining the newly synthesized protein in an open conformation. Functions as a peptidyl-prolyl cis-trans isomerase. This Streptomyces coelicolor (strain ATCC BAA-471 / A3(2) / M145) protein is Trigger factor.